A 435-amino-acid polypeptide reads, in one-letter code: Succinate--CoA ligase [ADP-forming] subunit beta, mitochondrial (435 aa).

Residues 1-20 (MIGRISQPLLNTSQKFMAPA) constitute a mitochondrion transit peptide. Residues 32–259 (MKILQNYEIK…SNAEFRQAKL (228 aa)) enclose the ATP-grasp domain. ATP-binding positions include lysine 69 and 76–78 (GRG). Asparagine 229 and aspartate 243 together coordinate Mg(2+). Residues asparagine 294 and 352–354 (GIM) contribute to the substrate site.

This sequence belongs to the succinate/malate CoA ligase beta subunit family. ATP-specific subunit beta subfamily. In terms of assembly, heterodimer of an alpha and a beta subunit. The beta subunit determines specificity for ATP. Mg(2+) serves as cofactor.

It is found in the mitochondrion. The catalysed reaction is succinate + ATP + CoA = succinyl-CoA + ADP + phosphate. The protein operates within carbohydrate metabolism; tricarboxylic acid cycle; succinate from succinyl-CoA (ligase route): step 1/1. Its function is as follows. ATP-specific succinyl-CoA synthetase functions in the citric acid cycle (TCA), coupling the hydrolysis of succinyl-CoA to the synthesis of ATP and thus represents the only step of substrate-level phosphorylation in the TCA. The beta subunit provides nucleotide specificity of the enzyme and binds the substrate succinate, while the binding sites for coenzyme A and phosphate are found in the alpha subunit. The polypeptide is Succinate--CoA ligase [ADP-forming] subunit beta, mitochondrial (Caenorhabditis elegans).